A 164-amino-acid polypeptide reads, in one-letter code: Lipoprotein signal peptidase (164 aa).

3 consecutive transmembrane segments (helical) span residues 12 to 32 (WLWLVVVVLIIDLGSKYLILQ), 70 to 90 (WFFAGIAIGISVILAVMMYRS), and 102 to 122 (ALIIGGALGNLFDRLWHGFVV). Catalysis depends on residues D123 and D141. Residues 137–157 (FNLADTAICVGAALIVLEGFL) traverse the membrane as a helical segment.

It belongs to the peptidase A8 family.

The protein resides in the cell inner membrane. It catalyses the reaction Release of signal peptides from bacterial membrane prolipoproteins. Hydrolyzes -Xaa-Yaa-Zaa-|-(S,diacylglyceryl)Cys-, in which Xaa is hydrophobic (preferably Leu), and Yaa (Ala or Ser) and Zaa (Gly or Ala) have small, neutral side chains.. It participates in protein modification; lipoprotein biosynthesis (signal peptide cleavage). Functionally, this protein specifically catalyzes the removal of signal peptides from prolipoproteins. This is Lipoprotein signal peptidase from Escherichia coli O9:H4 (strain HS).